Reading from the N-terminus, the 406-residue chain is Paracaspase (406 aa).

The tract at residues 193-374 (IGNSKYSQHR…TERKNNNIST (182 aa)) is caspase-like. Catalysis depends on residues histidine 266 and cysteine 311.

The protein belongs to the peptidase C14B family.

Functionally, not required for DIF-induced autophagic cell death and necrotic cell death. The chain is Paracaspase (pcp) from Dictyostelium discoideum (Social amoeba).